The following is a 116-amino-acid chain: S-adenosylmethionine decarboxylase proenzyme (116 aa).

The active-site Schiff-base intermediate with substrate; via pyruvic acid is the Ser62. A Pyruvic acid (Ser); by autocatalysis modification is found at Ser62. His67 acts as the Proton acceptor; for processing activity in catalysis. Cys82 acts as the Proton donor; for catalytic activity in catalysis.

It belongs to the prokaryotic AdoMetDC family. Type 1 subfamily. In terms of assembly, heterotetramer of two alpha and two beta chains arranged as a dimer of alpha/beta heterodimers. It depends on pyruvate as a cofactor. Post-translationally, is synthesized initially as an inactive proenzyme. Formation of the active enzyme involves a self-maturation process in which the active site pyruvoyl group is generated from an internal serine residue via an autocatalytic post-translational modification. Two non-identical subunits are generated from the proenzyme in this reaction, and the pyruvate is formed at the N-terminus of the alpha chain, which is derived from the carboxyl end of the proenzyme. The post-translation cleavage follows an unusual pathway, termed non-hydrolytic serinolysis, in which the side chain hydroxyl group of the serine supplies its oxygen atom to form the C-terminus of the beta chain, while the remainder of the serine residue undergoes an oxidative deamination to produce ammonia and the pyruvoyl group blocking the N-terminus of the alpha chain.

The catalysed reaction is S-adenosyl-L-methionine + H(+) = S-adenosyl 3-(methylsulfanyl)propylamine + CO2. The protein operates within amine and polyamine biosynthesis; S-adenosylmethioninamine biosynthesis; S-adenosylmethioninamine from S-adenosyl-L-methionine: step 1/1. Catalyzes the decarboxylation of S-adenosylmethionine to S-adenosylmethioninamine (dcAdoMet), the propylamine donor required for the synthesis of the polyamines spermine and spermidine from the diamine putrescine. This chain is S-adenosylmethionine decarboxylase proenzyme, found in Thermomicrobium roseum (strain ATCC 27502 / DSM 5159 / P-2).